Here is a 269-residue protein sequence, read N- to C-terminus: Elongation factor Ts (269 aa).

Residues 76-79 (TDFV) form an involved in Mg(2+) ion dislocation from EF-Tu region.

This sequence belongs to the EF-Ts family.

The protein localises to the cytoplasm. Associates with the EF-Tu.GDP complex and induces the exchange of GDP to GTP. It remains bound to the aminoacyl-tRNA.EF-Tu.GTP complex up to the GTP hydrolysis stage on the ribosome. In Deinococcus geothermalis (strain DSM 11300 / CIP 105573 / AG-3a), this protein is Elongation factor Ts.